A 271-amino-acid chain; its full sequence is 5-deoxy-glucuronate isomerase (271 aa).

Belongs to the isomerase IolB family.

The catalysed reaction is 5-deoxy-D-glucuronate = 5-dehydro-2-deoxy-D-gluconate. It participates in polyol metabolism; myo-inositol degradation into acetyl-CoA; acetyl-CoA from myo-inositol: step 4/7. Involved in the isomerization of 5-deoxy-glucuronate (5DG) to 5-dehydro-2-deoxy-D-gluconate (DKG or 2-deoxy-5-keto-D-gluconate). The sequence is that of 5-deoxy-glucuronate isomerase from Bacillus licheniformis (strain ATCC 14580 / DSM 13 / JCM 2505 / CCUG 7422 / NBRC 12200 / NCIMB 9375 / NCTC 10341 / NRRL NRS-1264 / Gibson 46).